The sequence spans 682 residues: Iron-phytosiderophore transporter yellow stripe 1 (682 aa).

The disordered stretch occupies residues 1–36; the sequence is MDLARRGGAAGADDEGEIERHEPAPEDMESDPAAAR. The next 15 membrane-spanning stretches (helical) occupy residues 56-76, 79-99, 124-144, 167-187, 236-256, 288-308, 334-354, 396-416, 428-448, 460-480, 514-534, 549-569, 574-594, 612-632, and 640-660; these read GVVA…KIAL, GLVP…LRGW, CAVA…LLGL, GFGW…LSLI, LSFV…CGFV, LVNI…WPLI, FLCI…VFGV, FPAW…AVII, VIVA…GTGL, IALF…AGLA, VAQF…FLLF, APYG…FSVL, LALS…RDVL, FLVG…VFVW, and AVFM…IWTF.

The protein belongs to the YSL (TC 2.A.67.2) family. As to expression, expressed in roots of young maize seedlings. Not detected in leaves of iron-sufficient plants, but accumulates in roots and leaves of iron-deficient plants.

The protein resides in the membrane. Its function is as follows. Involved in Fe(3+) uptake. Acts as a proton-coupled symporter for phytosiderophore- and nicotianamine-chelated metals. Capable of transporting either Fe(2+)-nicotianamine or Fe(3+)-phytosiderophore. May transport iron, zinc, nickel, copper and, at a lower rate, manganese and cadmium. In Zea mays (Maize), this protein is Iron-phytosiderophore transporter yellow stripe 1 (YS1).